We begin with the raw amino-acid sequence, 493 residues long: Neisserial heparin binding antigen (493 aa).

The signal sequence occupies residues 1–22; it reads MKEMMMFKRSVIAMACIFALSA. Cysteine 23 carries N-palmitoyl cysteine lipidation. Cysteine 23 carries S-diacylglycerol cysteine lipidation. Residues 27–206 are disordered; the sequence is GGGSPDVKSA…NPAPANGGSN (180 aa). A compositionally biased stretch (basic and acidic residues) spans 48–58; the sequence is SEKETEAKEDA. Over residues 59-75 the composition is skewed to low complexity; that stretch reads PQAGSQGQGAPSAQGSQ. Polar residues-rich tracts occupy residues 106-123 and 132-147; these read DMPQNAAGTDSSTPNHTP and MENQATDAGESSQPAN. Low complexity predominate over residues 165–188; sequence AGGQNAGNTAAQGANQAGNNQAAG. The Arg-rich motif signature appears at 301–311; that stretch reads RFRRSARSRRS.

The protein belongs to the NHBA family. As to quaternary structure, the C-terminal beta-barrel forms a monomer. Post-translationally, cleaved in vivo by the Neisserial phase-variable autotransporter/serine protease NalP to give 2 fragments. The N-terminus remains in the cell outer membrane while the C-terminus (beginning on Ser-298) is soluble; this soluble fragment is called C2. Cleaved in vitro by human lactoferrin (LTF, between Arg-310 and Ser-311), this fragment is called C1. Recombinant and cell surface protein is cleaved by human saliva kallikrein (KLK1) between Ser-308 and Arg-309; in saliva kallikrein is more active on NHBA than lactoferrin. Human plasma kallikrein (KLKB1) cleaves in a similar manner to KLK1.

Its subcellular location is the cell outer membrane. In terms of biological role, a major human immunogenic protein detected in patients recovering from meningitidis, where it induces bactericidal antibodies. Binds human cells, heparin and heparan sulfate proteoglycan in vitro via the Arg-rich motif. Heparin-binding to this protein protects bacteria against killing by bactericidal antibodies (serum killing). The bacteria binds a number of human extracellular sialyated and/or sulfated glycans via this protein, including chondroitin sulfate, heparin and ganglioside GT3. Whole protein binds DNA. Functionally, plays a role in extracellular-DNA (eDNA) mediated biofilm formation. In some strains (including cc32 strain H44/76 but not cc11 strain B16B6) eDNA stimulates biofilm formation. When NHBA is not processed by NalP, biofilm formation increases. This is probably because the number of positively charged, NHBA- and IgA-derived DNA-binding peptides on the cell surface rises, resulting in increased DNA-binding peptides and increased biofilm formation. The sequence is that of Neisserial heparin binding antigen from Neisseria meningitidis serogroup B / serotype 15 (strain H44/76).